The chain runs to 562 residues: Probable malate:quinone oxidoreductase (562 aa).

The segment at 530–562 (EVPDKSATPPDPTIAPKHQHSPTHNANSEMQAL) is disordered. The span at 551-562 (PTHNANSEMQAL) shows a compositional bias: polar residues.

It belongs to the MQO family. The cofactor is FAD.

The enzyme catalyses (S)-malate + a quinone = a quinol + oxaloacetate. It functions in the pathway carbohydrate metabolism; tricarboxylic acid cycle; oxaloacetate from (S)-malate (quinone route): step 1/1. This chain is Probable malate:quinone oxidoreductase, found in Xylella fastidiosa (strain 9a5c).